The primary structure comprises 198 residues: Recombination protein RecR (198 aa).

Residues 58-73 (CSVCGNFTDKDPCAIC) form a C4-type zinc finger. The region spanning 81–175 (SIICVIEQPK…KVTRIAHGVP (95 aa)) is the Toprim domain.

The protein belongs to the RecR family.

May play a role in DNA repair. It seems to be involved in an RecBC-independent recombinational process of DNA repair. It may act with RecF and RecO. The polypeptide is Recombination protein RecR (Clostridium botulinum (strain ATCC 19397 / Type A)).